We begin with the raw amino-acid sequence, 114 residues long: T cell receptor beta variable 5-6 (114 aa).

Residues 1–21 (MGPGLLCWALLCLLGAGLVDA) form the signal peptide. Residues 22–114 (GVTQSPTHLI…SALYLCASSL (93 aa)) form the Ig-like domain. A disulfide bridge links C42 with C110. A glycan (N-linked (GlcNAc...) asparagine) is linked at N90.

As to quaternary structure, alpha-beta TR is a heterodimer composed of an alpha and beta chain; disulfide-linked. The alpha-beta TR is associated with the transmembrane signaling CD3 coreceptor proteins to form the TR-CD3 (TcR or TCR). The assembly of alpha-beta TR heterodimers with CD3 occurs in the endoplasmic reticulum where a single alpha-beta TR heterodimer associates with one CD3D-CD3E heterodimer, one CD3G-CD3E heterodimer and one CD247 homodimer forming a stable octameric structure. CD3D-CD3E and CD3G-CD3E heterodimers preferentially associate with TR alpha and TR beta chains, respectively. The association of the CD247 homodimer is the last step of TcR assembly in the endoplasmic reticulum and is required for transport to the cell surface.

The protein resides in the cell membrane. In terms of biological role, v region of the variable domain of T cell receptor (TR) beta chain that participates in the antigen recognition. Alpha-beta T cell receptors are antigen specific receptors which are essential to the immune response and are present on the cell surface of T lymphocytes. Recognize peptide-major histocompatibility (MH) (pMH) complexes that are displayed by antigen presenting cells (APC), a prerequisite for efficient T cell adaptive immunity against pathogens. Binding of alpha-beta TR to pMH complex initiates TR-CD3 clustering on the cell surface and intracellular activation of LCK that phosphorylates the ITAM motifs of CD3G, CD3D, CD3E and CD247 enabling the recruitment of ZAP70. In turn ZAP70 phosphorylates LAT, which recruits numerous signaling molecules to form the LAT signalosome. The LAT signalosome propagates signal branching to three major signaling pathways, the calcium, the mitogen-activated protein kinase (MAPK) kinase and the nuclear factor NF-kappa-B (NF-kB) pathways, leading to the mobilization of transcription factors that are critical for gene expression and essential for T cell growth and differentiation. The T cell repertoire is generated in the thymus, by V-(D)-J rearrangement. This repertoire is then shaped by intrathymic selection events to generate a peripheral T cell pool of self-MH restricted, non-autoaggressive T cells. Post-thymic interaction of alpha-beta TR with the pMH complexes shapes TR structural and functional avidity. This Homo sapiens (Human) protein is T cell receptor beta variable 5-6.